The primary structure comprises 294 residues: ATP synthase gamma chain (294 aa).

Belongs to the ATPase gamma chain family. F-type ATPases have 2 components, CF(1) - the catalytic core - and CF(0) - the membrane proton channel. CF(1) has five subunits: alpha(3), beta(3), gamma(1), delta(1), epsilon(1). CF(0) has three main subunits: a, b and c.

It is found in the cell inner membrane. Produces ATP from ADP in the presence of a proton gradient across the membrane. The gamma chain is believed to be important in regulating ATPase activity and the flow of protons through the CF(0) complex. The polypeptide is ATP synthase gamma chain (Campylobacter jejuni subsp. doylei (strain ATCC BAA-1458 / RM4099 / 269.97)).